The following is a 396-amino-acid chain: Elongation factor Tu (396 aa).

In terms of domain architecture, tr-type G spans 10–206; that stretch reads KPHVNIGTIG…AVDESVPEPV (197 aa). The interval 19–26 is G1; it reads GHVDHGKT. 19–26 is a GTP binding site; the sequence is GHVDHGKT. Mg(2+) is bound at residue threonine 26. The segment at 62-66 is G2; it reads GITIN. A G3 region spans residues 83-86; sequence DAPG. GTP contacts are provided by residues 83 to 87 and 138 to 141; these read DAPGH and NKSD. The G4 stretch occupies residues 138–141; the sequence is NKSD. Residues 176-178 are G5; that stretch reads SGL.

Belongs to the TRAFAC class translation factor GTPase superfamily. Classic translation factor GTPase family. EF-Tu/EF-1A subfamily. Monomer.

It is found in the cytoplasm. The catalysed reaction is GTP + H2O = GDP + phosphate + H(+). GTP hydrolase that promotes the GTP-dependent binding of aminoacyl-tRNA to the A-site of ribosomes during protein biosynthesis. The protein is Elongation factor Tu of Beutenbergia cavernae (strain ATCC BAA-8 / DSM 12333 / CCUG 43141 / JCM 11478 / NBRC 16432 / NCIMB 13614 / HKI 0122).